Here is a 1313-residue protein sequence, read N- to C-terminus: Kinesin-like protein KIN-12B (1313 aa).

A disordered region spans residues M1–L74. Residues E17–T26 are compositionally biased toward polar residues. One can recognise a Kinesin motor domain in the interval G96–I431. G170–T177 lines the ATP pocket. 3 microtubules-binding regions span residues S298 to H302, V331 to E337, and H380 to R384. Residues K429–G467 are neck. The tract at residues E685 to K709 is disordered. Residues R699 to Q708 show a composition bias toward polar residues. Coiled coils occupy residues L932–S1003, A1062–E1130, and E1167–S1241.

The protein belongs to the TRAFAC class myosin-kinesin ATPase superfamily. Kinesin family. KIN-12 subfamily. In terms of assembly, homodimer and heterodimer with KIN12A. Interacts with TIO.

It is found in the cytoplasm. Its subcellular location is the cytoskeleton. The protein resides in the phragmoplast. In terms of biological role, plus-end directed kinesin-like motor enzyme that plays a critical role in the organization of phragmoplast microtubules during cytokinesis. Constitutes a signaling module in association with serine/threonine-protein kinase TIO that is required to support phragmoplast expansion and cell-plate growth in plant cells. The chain is Kinesin-like protein KIN-12B from Arabidopsis thaliana (Mouse-ear cress).